Reading from the N-terminus, the 331-residue chain is Ketol-acid reductoisomerase (NADP(+)) (331 aa).

One can recognise a KARI N-terminal Rossmann domain in the interval 2 to 182 (ARLYYDADAN…GGTRAGILET (181 aa)). Residues 25–28 (YGSQ), Ser51, Ser53, and 83–86 (DEVQ) contribute to the NADP(+) site. The active site involves His108. Gly134 is an NADP(+) binding site. Residues 183–328 (TFREETETDL…KDLRAMFSWL (146 aa)) enclose the KARI C-terminal knotted domain. The Mg(2+) site is built by Asp191, Glu195, Glu227, and Glu231. Ser252 contacts substrate.

Belongs to the ketol-acid reductoisomerase family. Requires Mg(2+) as cofactor.

The enzyme catalyses (2R)-2,3-dihydroxy-3-methylbutanoate + NADP(+) = (2S)-2-acetolactate + NADPH + H(+). It carries out the reaction (2R,3R)-2,3-dihydroxy-3-methylpentanoate + NADP(+) = (S)-2-ethyl-2-hydroxy-3-oxobutanoate + NADPH + H(+). It functions in the pathway amino-acid biosynthesis; L-isoleucine biosynthesis; L-isoleucine from 2-oxobutanoate: step 2/4. Its pathway is amino-acid biosynthesis; L-valine biosynthesis; L-valine from pyruvate: step 2/4. In terms of biological role, involved in the biosynthesis of branched-chain amino acids (BCAA). Catalyzes an alkyl-migration followed by a ketol-acid reduction of (S)-2-acetolactate (S2AL) to yield (R)-2,3-dihydroxy-isovalerate. In the isomerase reaction, S2AL is rearranged via a Mg-dependent methyl migration to produce 3-hydroxy-3-methyl-2-ketobutyrate (HMKB). In the reductase reaction, this 2-ketoacid undergoes a metal-dependent reduction by NADPH to yield (R)-2,3-dihydroxy-isovalerate. This chain is Ketol-acid reductoisomerase (NADP(+)), found in Cyanothece sp. (strain PCC 7425 / ATCC 29141).